We begin with the raw amino-acid sequence, 182 residues long: Large ribosomal subunit protein uL6 (182 aa).

It belongs to the universal ribosomal protein uL6 family. As to quaternary structure, part of the 50S ribosomal subunit.

Its function is as follows. This protein binds to the 23S rRNA, and is important in its secondary structure. It is located near the subunit interface in the base of the L7/L12 stalk, and near the tRNA binding site of the peptidyltransferase center. The chain is Large ribosomal subunit protein uL6 from Methanococcus maripaludis (strain C5 / ATCC BAA-1333).